Consider the following 425-residue polypeptide: D-amino acid dehydrogenase 2 (425 aa).

An FAD-binding site is contributed by 3-17 (ITVVGAGIVGISTAY).

This sequence belongs to the DadA oxidoreductase family. It depends on FAD as a cofactor.

The enzyme catalyses a D-alpha-amino acid + A + H2O = a 2-oxocarboxylate + AH2 + NH4(+). Its function is as follows. Oxidative deamination of D-amino acids. This is D-amino acid dehydrogenase 2 (dadA2) from Ralstonia nicotianae (strain ATCC BAA-1114 / GMI1000) (Ralstonia solanacearum).